Reading from the N-terminus, the 423-residue chain is AP-1 complex subunit mu-2 (423 aa).

An MHD domain is found at 168-421; the sequence is KNEVFIDVIE…ITQSGDYQLR (254 aa).

Belongs to the adaptor complexes medium subunit family. As to quaternary structure, adaptor protein complex 1 (AP-1) is a heterotetramer composed of two large adaptins (gamma-type subunit AP1G1 and beta-type subunit AP1B1), a medium adaptin (mu-type subunit AP1M1 or AP1M2) and a small adaptin (sigma-type subunit AP1S1 or AP1S2 or AP1S3). Interacts with P2X4. Phosphorylation of membrane-bound AP1M1/AP1M2 increases its affinity for sorting signals.

The protein resides in the golgi apparatus. Its subcellular location is the cytoplasmic vesicle. The protein localises to the clathrin-coated vesicle membrane. Functionally, subunit of clathrin-associated adaptor protein complex 1 that plays a role in protein sorting in the trans-Golgi network (TGN) and endosomes. The AP complexes mediate the recruitment of clathrin to membranes and the recognition of sorting signals within the cytosolic tails of transmembrane cargo molecules. The polypeptide is AP-1 complex subunit mu-2 (Ap1m2) (Rattus norvegicus (Rat)).